The following is a 293-amino-acid chain: 33 kDa chaperonin (293 aa).

2 cysteine pairs are disulfide-bonded: C238-C240 and C271-C274.

The protein belongs to the HSP33 family. Under oxidizing conditions two disulfide bonds are formed involving the reactive cysteines. Under reducing conditions zinc is bound to the reactive cysteines and the protein is inactive.

It is found in the cytoplasm. Functionally, redox regulated molecular chaperone. Protects both thermally unfolding and oxidatively damaged proteins from irreversible aggregation. Plays an important role in the bacterial defense system toward oxidative stress. This chain is 33 kDa chaperonin, found in Staphylococcus aureus (strain USA300).